A 199-amino-acid polypeptide reads, in one-letter code: Charged multivesicular body protein 1b (199 aa).

Coiled coils occupy residues 10–48 (NLKFAAKELNRNSKRCDKEEKAEKAKIKKAIQKGNMEVA) and 178–199 (TSVASAEQDELSQRLARLRDQV). The tract at residues 167–199 (ELPQGQTGSVGTSVASAEQDELSQRLARLRDQV) is disordered. Positions 170–182 (QGQTGSVGTSVAS) are enriched in polar residues. Residues 186–196 (DELSQRLARLR) carry the MIT-interacting motif motif.

This sequence belongs to the SNF7 family. Probable peripherally associated component of the endosomal sorting required for transport complex III (ESCRT-III).

The protein resides in the cytoplasm. It is found in the cytosol. It localises to the endosome. The protein localises to the late endosome membrane. Probable peripherally associated component of the endosomal sorting required for transport complex III (ESCRT-III) which is involved in multivesicular bodies (MVBs) formation and sorting of endosomal cargo proteins into MVBs. MVBs contain intraluminal vesicles (ILVs) that are generated by invagination and scission from the limiting membrane of the endosome and mostly are delivered to lysosomes enabling degradation of membrane proteins, such as stimulated growth factor receptors, lysosomal enzymes and lipids. This Gallus gallus (Chicken) protein is Charged multivesicular body protein 1b (CHMP1B).